The following is a 658-amino-acid chain: UvrABC system protein B (658 aa).

Residues 26–414 (DGLRRGVKHQ…PGVVEQIIRP (389 aa)) form the Helicase ATP-binding domain. 39–46 (GATGTGKT) contributes to the ATP binding site. A Beta-hairpin motif is present at residues 92–115 (YYDYYQPEAYVPQTDTYIEKDAKI). The region spanning 430-596 (QIDDLIGEIR…TVKKEIRDVI (167 aa)) is the Helicase C-terminal domain. The UVR domain occupies 622–657 (EELIRTLEAEMKEAAKALDFERAAQLRDIIFELKAE).

This sequence belongs to the UvrB family. Forms a heterotetramer with UvrA during the search for lesions. Interacts with UvrC in an incision complex.

It is found in the cytoplasm. Functionally, the UvrABC repair system catalyzes the recognition and processing of DNA lesions. A damage recognition complex composed of 2 UvrA and 2 UvrB subunits scans DNA for abnormalities. Upon binding of the UvrA(2)B(2) complex to a putative damaged site, the DNA wraps around one UvrB monomer. DNA wrap is dependent on ATP binding by UvrB and probably causes local melting of the DNA helix, facilitating insertion of UvrB beta-hairpin between the DNA strands. Then UvrB probes one DNA strand for the presence of a lesion. If a lesion is found the UvrA subunits dissociate and the UvrB-DNA preincision complex is formed. This complex is subsequently bound by UvrC and the second UvrB is released. If no lesion is found, the DNA wraps around the other UvrB subunit that will check the other stand for damage. The protein is UvrABC system protein B of Geobacillus kaustophilus (strain HTA426).